We begin with the raw amino-acid sequence, 213 residues long: Large ribosomal subunit protein uL1 (213 aa).

It belongs to the universal ribosomal protein uL1 family. In terms of assembly, part of the 50S ribosomal subunit.

In terms of biological role, binds directly to 23S rRNA. Probably involved in E site tRNA release. Functionally, protein L1 is also a translational repressor protein, it controls the translation of its operon by binding to its mRNA. The polypeptide is Large ribosomal subunit protein uL1 (Methanococcus maripaludis (strain C6 / ATCC BAA-1332)).